The primary structure comprises 103 residues: Host transcription reprogramming factor 6 (103 aa).

Residues 1–19 (MRATTAFQVIAFLAVGAAA) form the signal peptide. The C2H2-type zinc-finger motif lies at 66–92 (YWCPNQVCAKTFATQEERDHHIANTVH). Residues 82–103 (ERDHHIANTVHPTNSKRDVLLQ) form a disordered region.

Its subcellular location is the secreted. It is found in the host nucleus. Its function is as follows. Probable secreted effector that translocates into the nuclei of host cells to reprogram the expression of targeted genes by binding on effector binding elements in rice. In Pyricularia oryzae (strain 70-15 / ATCC MYA-4617 / FGSC 8958) (Rice blast fungus), this protein is Host transcription reprogramming factor 6.